The chain runs to 596 residues: Protein Malvolio (596 aa).

The segment at 1-34 (MSSNEAYHEPGAGGDGPGGSSGASGGGSQRSNQL) is disordered. Residues 11–28 (GAGGDGPGGSSGASGGGS) show a composition bias toward gly residues. The N-linked (GlcNAc...) asparagine glycan is linked to N41. Transmembrane regions (helical) follow at residues 77–97 (LWAF…PGNI), 105–125 (AAAK…GLLM), 154–174 (WILW…EVIG), 186–206 (VVPL…FLFL), 216–236 (FLFG…YIVS), 263–283 (AVGV…SALV), and 309–329 (VALF…AHGM). Residue N359 is glycosylated (N-linked (GlcNAc...) asparagine). The next 5 helical transmembrane spans lie at 373-393 (LFLG…GILA), 424-444 (VLVT…FSKM), 463-483 (PFAA…GEFV), 490-510 (IVSI…VVVQ), and 520-540 (LLAL…YLVI). A glycan (N-linked (GlcNAc...) asparagine) is linked at N574.

This sequence belongs to the NRAMP family. As to expression, expressed in macrophages and in the nervous system.

The protein localises to the membrane. Its function is as follows. Putative transporter required for normal taste behavior. May be a nitrite/nitrate transporter. This chain is Protein Malvolio (Mvl), found in Drosophila melanogaster (Fruit fly).